Reading from the N-terminus, the 209-residue chain is MKSLSYKRIYKSQEYLATLGTIEYRSLFGSYSLTVDDTVFAMVSDGELYLRACEQSAQYCVKHPPVWLTYKKCGRSVTLNYYRVDESLWRNQLKLVRLSKYSLDAALKEKSTRNTRERLKDLPNMSFHLEAILGEVGIKDVRALRILGAKMCWLRLRQQNSLVTEKILFMLEGAIIGIHEAALPVARRQELAEWADSLTPKQEFPAELE.

It belongs to the Sxy/TfoX family.

Induces low levels of natural DNA uptake by inducing transcription of the competence genes (the CRP-S regulon) required for DNA transformation. Induction of the CRP-S regulon also requires Sxy-activated promoter (CRP-S), cAMP receptor protein (CRP) and cAMP. Induces CRP-S site-containing genes which are involved in genome maintenance and transcription or encoding transposases and toxin-antitoxin pairs. The chain is Protein Sxy from Escherichia coli (strain K12).